The following is a 193-amino-acid chain: UPF0397 protein PA0141 (193 aa).

5 consecutive transmembrane segments (helical) span residues 11–31 (VTIA…SIPI), 43–63 (FLVF…GLLG), 69–89 (FFLF…LGFL), 109–129 (ILFF…LIAP), and 147–167 (GFLV…FLMS).

The protein belongs to the UPF0397 family.

Its subcellular location is the cell membrane. The protein is UPF0397 protein PA0141 of Phytoplasma australiense.